The chain runs to 75 residues: uncharacterized protein (75 aa).

Positions 1 to 21 (MRLIVVSIMVTLLSGCGSIIS) are cleaved as a signal peptide.

It to E.coli YidQ.

This is an uncharacterized protein from Escherichia coli O157:H7.